We begin with the raw amino-acid sequence, 828 residues long: DNA gyrase subunit A (828 aa).

A Topo IIA-type catalytic domain is found at 32–497 (LPDVRDGLKP…EVLSLEDEDL (466 aa)). The active-site O-(5'-phospho-DNA)-tyrosine intermediate is the Y120. The short motif at 524 to 530 (QKRGGRG) is the GyrA-box element.

Belongs to the type II topoisomerase GyrA/ParC subunit family. Heterotetramer, composed of two GyrA and two GyrB chains. In the heterotetramer, GyrA contains the active site tyrosine that forms a transient covalent intermediate with DNA, while GyrB binds cofactors and catalyzes ATP hydrolysis.

It localises to the cytoplasm. It carries out the reaction ATP-dependent breakage, passage and rejoining of double-stranded DNA.. In terms of biological role, a type II topoisomerase that negatively supercoils closed circular double-stranded (ds) DNA in an ATP-dependent manner to modulate DNA topology and maintain chromosomes in an underwound state. Negative supercoiling favors strand separation, and DNA replication, transcription, recombination and repair, all of which involve strand separation. Also able to catalyze the interconversion of other topological isomers of dsDNA rings, including catenanes and knotted rings. Type II topoisomerases break and join 2 DNA strands simultaneously in an ATP-dependent manner. The sequence is that of DNA gyrase subunit A from Streptococcus pyogenes serotype M6 (strain ATCC BAA-946 / MGAS10394).